The primary structure comprises 214 residues: Response regulator GacA (214 aa).

The region spanning 3–119 is the Response regulatory domain; that stretch reads KVLVVDDHDL…EMVQAIRLVF (117 aa). At D54 the chain carries 4-aspartylphosphate. Residues 143–208 enclose the HTH luxR-type domain; sequence NNSPFDLLSE…ELALLAVRHG (66 aa). Positions 167 to 186 form a DNA-binding region, H-T-H motif; the sequence is VQTISDKLCLSPKTVNTYRY.

In terms of processing, phosphorylated by LemA.

In terms of biological role, forms part of a two-component regulatory system GacA/GacA(LemA). May be involved in lesion formation, swarming and in the production of extracellular protease, syringomycin and N-acyl-L-homoserine lactone (acyl-HSL). The sequence is that of Response regulator GacA (gacA) from Pseudomonas syringae pv. syringae (strain B728a).